The following is a 954-amino-acid chain: E3 ubiquitin-protein ligase MIB2 (954 aa).

The 80-residue stretch at 1-80 (MDLDPYASMQ…AYDLLLYDNA (80 aa)) folds into the MIB/HERC2 1 domain. A ZZ-type zinc finger spans residues 86–138 (HPNIICDCCKKHGIRGMRWKCKMCFDYDLCTQCYMNNKHDLSHAFERYETAHS). Zn(2+)-binding residues include Cys-91, Cys-94, Cys-106, Cys-109, Cys-115, Cys-118, His-124, and His-128. Residues 149 to 227 (LTRITLKGTF…KVDLKCTVEA (79 aa)) enclose the MIB/HERC2 2 domain. ANK repeat units lie at residues 464–493 (QGRTALQIASYQGHLDVVKILLQAHATVNL), 497–526 (EGDTALHYAAFGNQADVARVLMAKGAGADL), 530–559 (AKCTALYVAVSQGFTEVVQALCELNCDVNL), 563–591 (HGDTPLHYAITADYKVIIEILTEVPNIDF), 597–626 (QGFNLLHYSALKGNKLAIKKILARARQLVD), 631–661 (DGFTALHLAALNNHKEVAEILIKEGRCDVNV), 665–694 (RNQTPLHLAIIQGHVGLVQLLVSEGSDVNA), 698–726 (DGDTAMHIALERQQLMSVLMEKREGEMGS), and 766–795 (RGKSPLDLITDGRIVQIIKDFSQKFREQQV). 2 RING-type zinc fingers span residues 830–865 (CLVCSELALLIHFFPCQHSIVCEECSRRMKKCIKCQ) and 910–943 (CPICIDDQIKLVFQCGHGSCPDCSTALTVCPICR).

It localises to the cytoplasm. The enzyme catalyses S-ubiquitinyl-[E2 ubiquitin-conjugating enzyme]-L-cysteine + [acceptor protein]-L-lysine = [E2 ubiquitin-conjugating enzyme]-L-cysteine + N(6)-ubiquitinyl-[acceptor protein]-L-lysine.. Its pathway is protein modification; protein ubiquitination. E3 ubiquitin-protein ligase that mediates ubiquitination of Delta receptors, which act as ligands of Notch proteins. Positively regulates the Delta-mediated Notch signaling by ubiquitinating the intracellular domain of Delta, leading to endocytosis of Delta receptors. The polypeptide is E3 ubiquitin-protein ligase MIB2 (MIB2) (Gallus gallus (Chicken)).